Reading from the N-terminus, the 68-residue chain is Large ribosomal subunit protein bL28 (68 aa).

Positions 1-30 are disordered; that stretch reads MAKICDHCGKKPQSGNNVSHANNKSKRRFE. A compositionally biased stretch (polar residues) spans 13 to 22; it reads QSGNNVSHAN.

This sequence belongs to the bacterial ribosomal protein bL28 family.

This is Large ribosomal subunit protein bL28 from Solidesulfovibrio magneticus (strain ATCC 700980 / DSM 13731 / RS-1) (Desulfovibrio magneticus).